Consider the following 1388-residue polypeptide: DNA-directed RNA polymerase subunit beta (1388 aa).

Belongs to the RNA polymerase beta chain family. The RNAP catalytic core consists of 2 alpha, 1 beta, 1 beta' and 1 omega subunit. When a sigma factor is associated with the core the holoenzyme is formed, which can initiate transcription.

It catalyses the reaction RNA(n) + a ribonucleoside 5'-triphosphate = RNA(n+1) + diphosphate. Its function is as follows. DNA-dependent RNA polymerase catalyzes the transcription of DNA into RNA using the four ribonucleoside triphosphates as substrates. This Stenotrophomonas maltophilia (strain K279a) protein is DNA-directed RNA polymerase subunit beta.